The primary structure comprises 358 residues: Very long chain fatty acid elongase AAEL008004 (358 aa).

The next 7 membrane-spanning stretches (helical) occupy residues 26 to 46, 66 to 86, 115 to 135, 147 to 167, 171 to 191, 207 to 227, and 234 to 254; these read WPLM…VYLV, LILY…EIGI, ACWW…FFVM, VIHH…TPGG, FFGL…LFTA, TSLQ…LLFI, and AFVW…NEFY. The segment covering 285–295 has biased composition (polar residues); the sequence is SAVSSNGSAIT. The interval 285–322 is disordered; that stretch reads SAVSSNGSAITANGHHGKNGSVHHHSNGSATSNGTSLL. The span at 299–310 shows a compositional bias: basic residues; that stretch reads HHGKNGSVHHHS. The span at 311–322 shows a compositional bias: polar residues; it reads NGSATSNGTSLL.

It belongs to the ELO family.

It is found in the membrane. It catalyses the reaction a very-long-chain acyl-CoA + malonyl-CoA + H(+) = a very-long-chain 3-oxoacyl-CoA + CO2 + CoA. Its function is as follows. Could be implicated in synthesis of very long chain fatty acids. The polypeptide is Very long chain fatty acid elongase AAEL008004 (Aedes aegypti (Yellowfever mosquito)).